A 189-amino-acid polypeptide reads, in one-letter code: Small ribosomal subunit protein uS5 (189 aa).

The S5 DRBM domain maps to Phe23–Val86.

The protein belongs to the universal ribosomal protein uS5 family. In terms of assembly, part of the 30S ribosomal subunit. Contacts proteins S4 and S8.

With S4 and S12 plays an important role in translational accuracy. In terms of biological role, located at the back of the 30S subunit body where it stabilizes the conformation of the head with respect to the body. This is Small ribosomal subunit protein uS5 from Bartonella bacilliformis (strain ATCC 35685 / KC583 / Herrer 020/F12,63).